The sequence spans 379 residues: F-box protein At1g67340 (379 aa).

Positions 41–92 (ADLLDSIPDDLVISILCKLGSTSRCPADFINVLLTCKRLKGLAMNPIVLSRL) constitute an F-box domain. Positions 304, 307, 320, 323, 329, 333, 342, and 346 each coordinate Zn(2+). An MYND-type; atypical zinc finger spans residues 304 to 346 (HAGCGRPETRKHEFRRCSVCGVVNYCSRACQALDWKLRHKMDC). The tract at residues 358–379 (GGEGNVQIDGNGNGDNVLLPMS) is disordered.

As to quaternary structure, part of a SCF (ASK-cullin-F-box) protein ligase complex. Interacts with SKP1A/ASK1, SKP1B/ASK2, ASK4, ASK11 and ASK13.

It is found in the nucleus. Its pathway is protein modification; protein ubiquitination. In terms of biological role, component of SCF(ASK-cullin-F-box) E3 ubiquitin ligase complexes, which may mediate the ubiquitination and subsequent proteasomal degradation of target proteins. The polypeptide is F-box protein At1g67340 (Arabidopsis thaliana (Mouse-ear cress)).